We begin with the raw amino-acid sequence, 323 residues long: Cytoskeleton protein RodZ (323 aa).

Residues 1 to 111 (MNTEASQDKT…LGKRRKKRDG (111 aa)) are Cytoplasmic-facing. Positions 19–71 (LRQAREQLGLSQQAVAERLCLKMSTVRDIEEDNLSADLASTFVRGYIRSYAKL) constitute an HTH cro/C1-type domain. The segment at residues 30–49 (QQAVAERLCLKMSTVRDIEE) is a DNA-binding region (H-T-H motif). The chain crosses the membrane as a helical; Signal-anchor for type II membrane protein span at residues 112–132 (WLMSFTWLIVFVVVGLTGAWW). At 133 to 323 (WQNHKAQQEE…RVARLTVAAQ (191 aa)) the chain is on the periplasmic side. Polar residues-rich tracts occupy residues 149 to 172 (QSSA…NADN) and 179 to 214 (NGST…SPSQ). The segment at 149-236 (QSSAQLSQNN…APLPTADAGV (88 aa)) is disordered. Over residues 215 to 234 (TTLPETTPAAPTAPLPTADA) the composition is skewed to low complexity.

The protein belongs to the RodZ family.

It is found in the cell inner membrane. Functionally, cytoskeletal protein that is involved in cell-shape control through regulation of the length of the long axis. The polypeptide is Cytoskeleton protein RodZ (Serratia proteamaculans (strain 568)).